Here is a 643-residue protein sequence, read N- to C-terminus: Transcription elongation factor B polypeptide 3 (643 aa).

In terms of domain architecture, TFIIS N-terminal spans 9-82 (DVVRHYQRSI…TKWKAMVAKE (74 aa)). Disordered stretches follow at residues 86 to 289 (IAST…MGAN) and 302 to 351 (SSKK…SKKP). Residues 94–106 (HNEEDSGKTKSSD) are compositionally biased toward basic and acidic residues. Residues 114–124 (KGGNSSSGEDL) show a composition bias toward polar residues. At serine 120 the chain carries Phosphoserine. A compositionally biased stretch (basic residues) spans 127 to 136 (SKHKSKHAKS). 2 stretches are compositionally biased toward basic and acidic residues: residues 164 to 198 (HDKS…KDSS) and 207 to 237 (SKSE…VKDK). The segment covering 238–255 (SSKHKSSSSKSSKRSHSP) has biased composition (basic residues). The segment covering 302–336 (SSKKSSSNSKSKFVAKPTAAPSSSALSAPTTAGSS) has biased composition (low complexity). The tract at residues 413 to 571 (AQGISSKTMR…PPRSVQRKQE (159 aa)) is activation domain. Residues 439-448 (SLFDLCTRVL) form an interacting with Elongin BC complex region.

The protein resides in the nucleus. Its function is as follows. SIII, also known as elongin, is a general transcription elongation factor that increases the RNA polymerase II transcription elongation past template-encoded arresting sites. Subunit A is transcriptionally active and its transcription activity is strongly enhanced by binding to the dimeric complex of the SIII regulatory subunits B and C (elongin BC complex). May play an important role in metamorphosis. In Drosophila melanogaster (Fruit fly), this protein is Transcription elongation factor B polypeptide 3 (EloA).